The chain runs to 146 residues: Cytidine deaminase (146 aa).

One can recognise a CMP/dCMP-type deaminase domain in the interval 13–140 (EHVQRLLLSS…ELLPASFGPE (128 aa)). 54–56 (NIE) contacts substrate. A Zn(2+)-binding site is contributed by cysteine 65. The Proton donor role is filled by glutamate 67. Cysteine 99 and cysteine 102 together coordinate Zn(2+).

The protein belongs to the cytidine and deoxycytidylate deaminase family. In terms of assembly, homotetramer. Requires Zn(2+) as cofactor.

The enzyme catalyses cytidine + H2O + H(+) = uridine + NH4(+). The catalysed reaction is 2'-deoxycytidine + H2O + H(+) = 2'-deoxyuridine + NH4(+). Functionally, this enzyme scavenges exogenous and endogenous cytidine and 2'-deoxycytidine for UMP synthesis. This is Cytidine deaminase (Cda) from Mus musculus (Mouse).